The sequence spans 434 residues: 3-phosphoshikimate 1-carboxyvinyltransferase (434 aa).

3-phosphoshikimate-binding residues include Lys22, Ser23, and Arg27. Position 22 (Lys22) interacts with phosphoenolpyruvate. 2 residues coordinate phosphoenolpyruvate: Gly93 and Arg121. Residues Ser168, Ser169, Gln170, Ser199, Asp320, and Lys347 each coordinate 3-phosphoshikimate. Gln170 contacts phosphoenolpyruvate. Catalysis depends on Asp320, which acts as the Proton acceptor. Phosphoenolpyruvate-binding residues include Arg351, Arg394, and Lys419.

This sequence belongs to the EPSP synthase family. Monomer.

It localises to the cytoplasm. The catalysed reaction is 3-phosphoshikimate + phosphoenolpyruvate = 5-O-(1-carboxyvinyl)-3-phosphoshikimate + phosphate. It participates in metabolic intermediate biosynthesis; chorismate biosynthesis; chorismate from D-erythrose 4-phosphate and phosphoenolpyruvate: step 6/7. Catalyzes the transfer of the enolpyruvyl moiety of phosphoenolpyruvate (PEP) to the 5-hydroxyl of shikimate-3-phosphate (S3P) to produce enolpyruvyl shikimate-3-phosphate and inorganic phosphate. The chain is 3-phosphoshikimate 1-carboxyvinyltransferase from Burkholderia orbicola (strain MC0-3).